The following is a 484-amino-acid chain: uncharacterized protein (484 aa).

Residues 1 to 14 (MIDSTSTATATSKT) show a composition bias toward low complexity. The disordered stretch occupies residues 1–32 (MIDSTSTATATSKTVELNTNGSKTDASSENGT). Positions 15-32 (VELNTNGSKTDASSENGT) are enriched in polar residues. At K305 the chain carries N6-(pyridoxal phosphate)lysine.

It belongs to the class-III pyridoxal-phosphate-dependent aminotransferase family. Requires pyridoxal 5'-phosphate as cofactor.

This is an uncharacterized protein from Schizosaccharomyces pombe (strain 972 / ATCC 24843) (Fission yeast).